Reading from the N-terminus, the 560-residue chain is Probable sulfate transporter MT1781 (560 aa).

The next 11 helical transmembrane spans lie at 29–49, 51–71, 79–99, 105–125, 138–158, 184–204, 207–227, 256–276, 333–353, 355–375, and 394–414; these read VLAG…YATV, GLPP…YALL, IGPE…MAAG, AVLA…AGTA, VLVG…LGTI, WPTF…TRWA, APGP…MSLD, ALII…VLTA, LIAL…LAMF, IAAL…LSEF, and AAVL…LSIL. The STAS domain maps to 442 to 557; that stretch reads DYPQAKRVPG…MTLPTAVQAF (116 aa).

It belongs to the SLC26A/SulP transporter (TC 2.A.53) family.

Its subcellular location is the cell membrane. This is Probable sulfate transporter MT1781 from Mycobacterium tuberculosis (strain CDC 1551 / Oshkosh).